The primary structure comprises 527 residues: NAD(P)H-quinone oxidoreductase chain 4 1 (527 aa).

The next 13 helical transmembrane spans lie at 6–26 (FPWLTAIILFPIVAALLVPII), 36–56 (WFALTVGLIDFALIIYAFYSS), 91–111 (LIILTGFITTLAILAAWPVTF), 113–133 (PKLFYFLMLLMYGGQIAVFAV), 136–156 (LLLFFLVWELELVPVYLILSI), 169–189 (FILYTAGGSLFILVAALTMAF), 212–232 (LFLYAGFLIAYGVKLPIFPLH), 243–263 (TAPAHMLLAGILLKMGGYALL), 275–295 (AVFAPVLVILGVVNIIYAALT), 306–326 (IAYSSISHMGFVLIGMASFTD), 331–351 (GAMLQMISHGLIGASLFFMVG), 387–407 (LALPGMSGFVAELMVFIGFAT), and 417–437 (VIIVFLAAIGVILTPIYLLSM).

This sequence belongs to the complex I subunit 4 family.

The protein resides in the cellular thylakoid membrane. It catalyses the reaction a plastoquinone + NADH + (n+1) H(+)(in) = a plastoquinol + NAD(+) + n H(+)(out). The catalysed reaction is a plastoquinone + NADPH + (n+1) H(+)(in) = a plastoquinol + NADP(+) + n H(+)(out). NDH-1 shuttles electrons from NAD(P)H, via FMN and iron-sulfur (Fe-S) centers, to quinones in the respiratory chain. The immediate electron acceptor for the enzyme in this species is believed to be plastoquinone. Couples the redox reaction to proton translocation (for every two electrons transferred, four hydrogen ions are translocated across the cytoplasmic membrane), and thus conserves the redox energy in a proton gradient. This chain is NAD(P)H-quinone oxidoreductase chain 4 1, found in Microcystis aeruginosa (strain NIES-843 / IAM M-2473).